The primary structure comprises 673 residues: RAS guanyl-releasing protein 4 (673 aa).

Composition is skewed to basic residues over residues 1–10 (MNRKDSKRKS) and 20–32 (GRGR…RHKT). 2 disordered regions span residues 1–34 (MNRK…KTCP) and 162–188 (QSLG…PGLG). The region spanning 49–172 (GMLNEGGCSE…SLGDFSSRLS (124 aa)) is the N-terminal Ras-GEF domain. Residues 201-432 (ETGELAEHLT…YELSYAREPR (232 aa)) form the Ras-GEF domain. Residues 466-501 (HVEQLVESVFKNYDPDGRGTISQEDFERLSGNFPFA) enclose the EF-hand domain. Residues 540–590 (LHTFQEVTFRKPTFCNSCSGFLWGVTKQGYRCRDCGLCCHRHCRDQVKVEC) form a Phorbol-ester/DAG-type zinc finger. Disordered regions lie at residues 593 to 618 (RPGA…ASCG) and 638 to 673 (RHAW…KLNS). A compositionally biased stretch (pro residues) spans 603–612 (PEAPVPPTPV).

Belongs to the RASGRP family.

The protein localises to the cytoplasm. The protein resides in the cell membrane. Functionally, functions as a cation- and diacylglycerol (DAG)-regulated nucleotide exchange factor activating Ras through the exchange of bound GDP for GTP. In neutrophils, participates in a phospholipase C-activating N-formyl peptide-activated GPCR (G protein-coupled receptor) signaling pathway by promoting Ras-mediated activation of PIK3CG/PI3Kgamma to promote neutrophil functional responses. In CD117(+) dendritic cells and mast cells, participates in an lipopolysaccharide (LPS)-activated signaling pathway that stimulates the production of interferon-gamma and other pro-inflammatory cytokines by natural killer (NK) cells. May function in mast cell differentiation. Does not appear to be required for the development of B-cells, DC-cells, T-cells, or NK-cells. The chain is RAS guanyl-releasing protein 4 (RASGRP4) from Bos taurus (Bovine).